Here is a 185-residue protein sequence, read N- to C-terminus: Hypoxanthine/guanine phosphoribosyltransferase (185 aa).

It belongs to the purine/pyrimidine phosphoribosyltransferase family. Archaeal HPRT subfamily. Homodimer.

Its subcellular location is the cytoplasm. It carries out the reaction IMP + diphosphate = hypoxanthine + 5-phospho-alpha-D-ribose 1-diphosphate. The catalysed reaction is GMP + diphosphate = guanine + 5-phospho-alpha-D-ribose 1-diphosphate. Its pathway is purine metabolism; IMP biosynthesis via salvage pathway; IMP from hypoxanthine: step 1/1. Functionally, catalyzes a salvage reaction resulting in the formation of IMP that is energically less costly than de novo synthesis. This chain is Hypoxanthine/guanine phosphoribosyltransferase, found in Methanococcus maripaludis (strain C6 / ATCC BAA-1332).